The following is a 40-amino-acid chain: Photosystem II reaction center protein J (40 aa).

The chain crosses the membrane as a helical span at residues 8–28; that stretch reads IPLWLIGTVTGIIVIGLLGIF.

Belongs to the PsbJ family. PSII is composed of 1 copy each of membrane proteins PsbA, PsbB, PsbC, PsbD, PsbE, PsbF, PsbH, PsbI, PsbJ, PsbK, PsbL, PsbM, PsbT, PsbX, PsbY, PsbZ, Psb30/Ycf12, at least 3 peripheral proteins of the oxygen-evolving complex and a large number of cofactors. It forms dimeric complexes.

Its subcellular location is the plastid. It is found in the chloroplast thylakoid membrane. One of the components of the core complex of photosystem II (PSII). PSII is a light-driven water:plastoquinone oxidoreductase that uses light energy to abstract electrons from H(2)O, generating O(2) and a proton gradient subsequently used for ATP formation. It consists of a core antenna complex that captures photons, and an electron transfer chain that converts photonic excitation into a charge separation. The sequence is that of Photosystem II reaction center protein J from Pinus koraiensis (Korean pine).